Reading from the N-terminus, the 622-residue chain is 1,4-alpha-glucan branching enzyme GlgB (622 aa).

Asp-300 serves as the catalytic Nucleophile. The active-site Proton donor is Glu-351.

Belongs to the glycosyl hydrolase 13 family. GlgB subfamily. As to quaternary structure, monomer.

The enzyme catalyses Transfers a segment of a (1-&gt;4)-alpha-D-glucan chain to a primary hydroxy group in a similar glucan chain.. It participates in glycan biosynthesis; glycogen biosynthesis. In terms of biological role, catalyzes the formation of the alpha-1,6-glucosidic linkages in glycogen by scission of a 1,4-alpha-linked oligosaccharide from growing alpha-1,4-glucan chains and the subsequent attachment of the oligosaccharide to the alpha-1,6 position. This chain is 1,4-alpha-glucan branching enzyme GlgB, found in Streptococcus agalactiae serotype V (strain ATCC BAA-611 / 2603 V/R).